The following is a 149-amino-acid chain: Large ribosomal subunit protein bL9 (149 aa).

The protein belongs to the bacterial ribosomal protein bL9 family.

In terms of biological role, binds to the 23S rRNA. This chain is Large ribosomal subunit protein bL9, found in Vibrio cholerae serotype O1 (strain ATCC 39541 / Classical Ogawa 395 / O395).